The chain runs to 316 residues: Transcription initiation factor IIB (316 aa).

The TFIIB-type zinc-finger motif lies at 11-42 (PRVTCPNHPDAILVEDYRAGDMICPECGLVVG). 4 residues coordinate Zn(2+): Cys-15, His-18, Cys-34, and Cys-37. A phosphoserine mark is found at Ser-70, Ser-76, and Ser-92. 2 repeat units span residues 124-200 (MADR…LILK) and 218-294 (FCSN…LIYP). DNA-binding residues include Lys-152, Arg-154, Lys-189, and Lys-196. The core promoter DNA-binding stretch occupies residues 189-193 (KEIGR). Position 238 is an N6-acetyllysine; by autocatalysis (Lys-238). The segment at 244–316 (LVPGRSPISV…DTPVDKLPQL (73 aa)) is necessary for TATA box-bound TBP complex formation. Arg-248 contributes to the DNA binding site. The core promoter DNA-binding stretch occupies residues 249 to 252 (SPIS). DNA is bound by residues Lys-272, Ala-281, Thr-284, Arg-286, and Arg-290. Residues 283–286 (VTIR) are core promoter DNA-binding.

The protein belongs to the TFIIB family. As to quaternary structure, found in a ternary complex with TATA box-bound TBP. Part of a TFIID-containing RNA polymerase II pre-initiation complex (PIC) that is composed of TBP and at least GTF2A1, GTF2A2, GTF2E1, GTF2E2, GTF2F1, GTF2H2, GTF2H3, GTF2H4, GTF2H5, GTF2B, TCEA1, ERCC2, ERCC3, TAF1, TAF2, TAF3, TAF4, TAF5, TAF6, TAF7, TAF8, TAF9, TAF10, TAF11, TAF12 and TAF13. Associates with TFIID-TFIIA (DA complex) to form TFIID-TFIIA-TFIIB (DAB complex), which is then recognized by RNA polymerase II (Pol II). Found in a RNA polymerase II initiation complex. Interacts (via C-terminus) with TBP; this interaction with TATA box-bound TBP guides Pol II into the PIC. Interacts (via N-terminus) with Pol II. Interacts (via C-terminus) with SSU72; this interaction is inhibited by SYMPK. Interacts with NR2F1; this interaction is direct. Interacts with PGR. Interacts with ESR1. Interacts with GTF2F1 (via C-terminus and preferentially via acetylated form); this interaction prevents binding of GTF2B to GTF2F2. Interacts with GTF2F2 (via N-terminus); this interaction is inhibited in presence of GTF2F1. Interacts with the transcription elongation factor TCEA2. Interacts with HSF1 (via transactivation domain). Interacts with GPBP1. In terms of processing, acetylated. Autoacetylated; autoacetylation at Lys-238 stimulates transcription activation.

It is found in the nucleus. The protein localises to the chromosome. The catalysed reaction is L-lysyl-[protein] + acetyl-CoA = N(6)-acetyl-L-lysyl-[protein] + CoA + H(+). General transcription factor that plays a role in transcription initiation by RNA polymerase II (Pol II). Involved in the pre-initiation complex (PIC) formation and Pol II recruitment at promoter DNA. Together with the TATA box-bound TBP forms the core initiation complex and provides a bridge between TBP and the Pol II-TFIIF complex. Released from the PIC early following the onset of transcription during the initiation and elongation transition and reassociates with TBP during the next transcription cycle. Associates with chromatin to core promoter-specific regions. Binds to two distinct DNA core promoter consensus sequence elements in a TBP-independent manner; these IIB-recognition elements (BREs) are localized immediately upstream (BREu), 5'-[GC][GC][GA]CGCC-3', and downstream (BREd), 5'-[GA]T[TGA][TG][GT][TG][TG]-3', of the TATA box element. Modulates transcription start site selection. Also exhibits autoacetyltransferase activity that contributes to the activated transcription. The chain is Transcription initiation factor IIB from Mus musculus (Mouse).